Consider the following 536-residue polypeptide: CBS domain-containing protein CBSCBSPB2 (536 aa).

Residues 1–23 (MTTTPTSSGRRSISSIRRTSSAS) show a composition bias toward low complexity. The interval 1–60 (MTTTPTSSGRRSISSIRRTSSASKKPVLQSEESESGSGSINENTSKPDSPLAQPVSDGER) is disordered. 4 consecutive CBS domains span residues 66–124 (RLSK…LRPE), 132–187 (MTRN…RMEK), 228–287 (VTEN…LSPE), and 295–354 (MTPN…NNSS). The 84-residue stretch at 406-489 (VSSFAFKFED…KVLRLHLDFT (84 aa)) folds into the PB1 domain. A helical membrane pass occupies residues 509–529 (VWWQTGVLAGAIVLTSIGLFV).

Its subcellular location is the membrane. The sequence is that of CBS domain-containing protein CBSCBSPB2 (CBSCBSPB2) from Arabidopsis thaliana (Mouse-ear cress).